The primary structure comprises 308 residues: Methionyl-tRNA formyltransferase (308 aa).

A (6S)-5,6,7,8-tetrahydrofolate-binding site is contributed by Ser-109 to Pro-112.

The protein belongs to the Fmt family.

It carries out the reaction L-methionyl-tRNA(fMet) + (6R)-10-formyltetrahydrofolate = N-formyl-L-methionyl-tRNA(fMet) + (6S)-5,6,7,8-tetrahydrofolate + H(+). Functionally, attaches a formyl group to the free amino group of methionyl-tRNA(fMet). The formyl group appears to play a dual role in the initiator identity of N-formylmethionyl-tRNA by promoting its recognition by IF2 and preventing the misappropriation of this tRNA by the elongation apparatus. The sequence is that of Methionyl-tRNA formyltransferase from Caulobacter vibrioides (strain NA1000 / CB15N) (Caulobacter crescentus).